The following is a 261-amino-acid chain: Acetoacetate decarboxylase 2 (261 aa).

The Schiff-base intermediate with acetoacetate role is filled by K116.

The protein belongs to the ADC family.

It catalyses the reaction acetoacetate + H(+) = acetone + CO2. Functionally, catalyzes the conversion of acetoacetate to acetone and carbon dioxide. The chain is Acetoacetate decarboxylase 2 from Mesorhizobium japonicum (strain LMG 29417 / CECT 9101 / MAFF 303099) (Mesorhizobium loti (strain MAFF 303099)).